The primary structure comprises 275 residues: Release factor glutamine methyltransferase (275 aa).

S-adenosyl-L-methionine contacts are provided by residues 117–121 (GTGSG), Asp140, Trp168, and Asn182. 182 to 185 (NPPY) is a binding site for substrate.

The protein belongs to the protein N5-glutamine methyltransferase family. PrmC subfamily.

The enzyme catalyses L-glutaminyl-[peptide chain release factor] + S-adenosyl-L-methionine = N(5)-methyl-L-glutaminyl-[peptide chain release factor] + S-adenosyl-L-homocysteine + H(+). Its function is as follows. Methylates the class 1 translation termination release factors RF1/PrfA and RF2/PrfB on the glutamine residue of the universally conserved GGQ motif. This is Release factor glutamine methyltransferase from Buchnera aphidicola subsp. Schizaphis graminum (strain Sg).